The primary structure comprises 106 residues: MAEPWAGQFLQALPATVLGALGTLGSEFLREWETQDMRVTLFKLLLLWLVLSLLGIQLAWGFYGNTVTGLYHRPGLGGQNGSTPDGSTHFPSWEMAANEALKTHRE.

N-acetylalanine is present on Ala-2. Over 2–8 (AEPWAGQ) the chain is Extracellular. Residues 9 to 29 (FLQALPATVLGALGTLGSEFL) form a helical membrane-spanning segment. The Cytoplasmic segment spans residues 30 to 43 (REWETQDMRVTLFK). A helical membrane pass occupies residues 44 to 64 (LLLLWLVLSLLGIQLAWGFYG). The Extracellular segment spans residues 65–106 (NTVTGLYHRPGLGGQNGSTPDGSTHFPSWEMAANEALKTHRE). A glycan (N-linked (GlcNAc...) asparagine) is linked at Asn-80.

Belongs to the TCTA family.

Its subcellular location is the membrane. Functionally, may be required for cellular fusion during osteoclastogenesis. The sequence is that of T-cell leukemia translocation-altered gene protein homolog (Tcta) from Rattus norvegicus (Rat).